A 431-amino-acid chain; its full sequence is MANSC domain-containing protein 1 (431 aa).

The first 26 residues, 1–26 (MFFGGEGSLTYTLVIICFLTLRLSAS), serve as a signal peptide directing secretion. Residues 27 to 385 (QNCLKKSLED…QYGLPFEKWL (359 aa)) lie on the Extracellular side of the membrane. The 85-residue stretch at 33–117 (SLEDVVIDIQ…LKPAKGLMSY (85 aa)) folds into the MANSC domain. N-linked (GlcNAc...) asparagine glycosylation is found at Asn72, Asn222, and Asn251. The tract at residues 234–277 (SPHTTSATPKPATLLPTNASVTPSGTSQPQLATTAPPVTTVTSQ) is disordered. Residues 248–261 (LPTNASVTPSGTSQ) are compositionally biased toward polar residues. Over residues 262–277 (PQLATTAPPVTTVTSQ) the composition is skewed to low complexity. 2 N-linked (GlcNAc...) asparagine glycosylation sites follow: Asn327 and Asn352. The tract at residues 352-372 (NKTASWEGREASPGSSSQGSV) is disordered. The helical transmembrane segment at 386–408 (LIGSLLFGVLFLVIGLVLLGRIL) threads the bilayer. The Cytoplasmic segment spans residues 409–431 (SESLRRKRYSRLDYLINGIYVDI).

As to expression, widely expressed.

The protein resides in the membrane. The sequence is that of MANSC domain-containing protein 1 (MANSC1) from Homo sapiens (Human).